The chain runs to 632 residues: Probable potassium transport system protein Kup 2 (632 aa).

12 helical membrane-spanning segments follow: residues 19 to 39 (FWGL…TSPL), 58 to 78 (MIVL…VTAK), 110 to 130 (MFLM…SMIT), 147 to 167 (PALE…LFAV), 178 to 198 (AFGP…IVHI), 216 to 236 (FLLS…LAVT), 257 to 277 (WLFF…ALVL), 290 to 310 (MVPE…TVIA), 347 to 367 (IYLP…VLLF), 377 to 397 (YGIA…VVIW), 404 to 424 (AAVA…FFSA), and 429 to 449 (LFEG…TIWT).

Belongs to the HAK/KUP transporter (TC 2.A.72) family.

The protein localises to the cell inner membrane. The catalysed reaction is K(+)(in) + H(+)(in) = K(+)(out) + H(+)(out). Functionally, transport of potassium into the cell. Likely operates as a K(+):H(+) symporter. The chain is Probable potassium transport system protein Kup 2 from Bradyrhizobium sp. (strain BTAi1 / ATCC BAA-1182).